We begin with the raw amino-acid sequence, 198 residues long: Basic helix-loop-helix transcription factor amos (198 aa).

The segment at 76–131 is disordered; it reads EQQQHHLQANPLGKNQGRSPRYWNKQQRSKPYDKLSTSMSSSTSSASSSSSSSAGF. Positions 111–129 are enriched in low complexity; sequence STSMSSSTSSASSSSSSSA. Residues 138 to 190 form the bHLH domain; the sequence is KRRLAANARERRRMNSLNDAFDKLRDVVPSLGHDRRLSKYETLQMAQAYIGDL.

In terms of assembly, efficient DNA binding requires dimerization with another bHLH protein. Interacts with Daughterless (da). As to expression, during embryonic development, expression is seen in a small cluster of ectodermal cells during stage 10 which becomes restricted to 1 cell by stage 11. Expression is lost from this cell in the thorax and then the abdomen. Later expression is restricted to sensory organ precursors. Very transient expression was detected in distal leg disks at approximately 0-4 hours after puparium formation (APF), correlating with the anlage of the innervated tarsal claw.

It localises to the nucleus. In terms of biological role, transcription factor involved in early neurogenesis; sensillum basiconica formation and maybe sensillum trichodea development. Promotes multiple dendritic (MD) neuron formation. Required for olfactory sensilla; regulated by lozenge (lz). The protein is Basic helix-loop-helix transcription factor amos (amos) of Drosophila melanogaster (Fruit fly).